Reading from the N-terminus, the 150-residue chain is Sulfur-rich protein, serovar D (150 aa).

Transmembrane regions (helical) follow at residues 41-61 and 67-87; these read VGLVVIGLLLVIATLIFLVSA and AIYLVAIPAILGCVNICVGIL.

It is found in the membrane. This Chlamydia trachomatis serovar D (strain ATCC VR-885 / DSM 19411 / UW-3/Cx) protein is Sulfur-rich protein, serovar D (srp).